A 189-amino-acid polypeptide reads, in one-letter code: Cancer/testis antigen family 45 member A5 (189 aa).

Residues 1 to 23 (MTDKTEKVAVDPETVFKRPRECD) are compositionally biased toward basic and acidic residues. Disordered stretches follow at residues 1–27 (MTDK…SPSY) and 82–118 (DGMM…SPKS).

Belongs to the CT45 family. Testis specific. Expressed in cancer cell lines.

It localises to the nucleus. The chain is Cancer/testis antigen family 45 member A5 from Homo sapiens (Human).